The chain runs to 109 residues: MEKSICTSVLVLGLFISSAIGQFCPRDRYEFPPIQCKTHADCGYRSFCEPSGTISRCCTKCPIGTIMVYPRCNWPSPGGCPPFSTCENDPVGLGRFAAVCCSRPYPFYG.

An N-terminal signal peptide occupies residues 1-21 (MEKSICTSVLVLGLFISSAIG).

In terms of tissue distribution, prismatic layer of shell (at protein level). Expressed primarily in the mantle with highest level in the mantle edge and lower level in the mantle pallium.

It is found in the secreted. This is an uncharacterized protein from Margaritifera margaritifera (Freshwater pearl mussel).